The following is a 154-amino-acid chain: UPF0178 protein Gbem_2221 (154 aa).

Belongs to the UPF0178 family.

The polypeptide is UPF0178 protein Gbem_2221 (Citrifermentans bemidjiense (strain ATCC BAA-1014 / DSM 16622 / JCM 12645 / Bem) (Geobacter bemidjiensis)).